A 125-amino-acid polypeptide reads, in one-letter code: Histone H2A (125 aa).

Positions 1–18 (MSGRGKGGKARAKAKSRS) are enriched in basic residues. The tract at residues 1–21 (MSGRGKGGKARAKAKSRSSRA) is disordered. An N-acetylserine modification is found at Ser2. Ser2 carries the post-translational modification Phosphoserine. At Gln104 the chain carries N5-methylglutamine.

Belongs to the histone H2A family. The nucleosome is a histone octamer containing two molecules each of H2A, H2B, H3 and H4 assembled in one H3-H4 heterotetramer and two H2A-H2B heterodimers. The octamer wraps approximately 147 bp of DNA.

The protein resides in the nucleus. It is found in the chromosome. Core component of nucleosome. Nucleosomes wrap and compact DNA into chromatin, limiting DNA accessibility to the cellular machineries which require DNA as a template. Histones thereby play a central role in transcription regulation, DNA repair, DNA replication and chromosomal stability. DNA accessibility is regulated via a complex set of post-translational modifications of histones, also called histone code, and nucleosome remodeling. The protein is Histone H2A of Asterias rubens (Common European starfish).